The following is a 384-amino-acid chain: 8-amino-7-oxononanoate synthase (384 aa).

Arginine 21 lines the substrate pocket. Pyridoxal 5'-phosphate is bound at residue 108–109 (GF). Histidine 133 serves as a coordination point for substrate. Pyridoxal 5'-phosphate is bound by residues serine 179, histidine 207, and threonine 233. At lysine 236 the chain carries N6-(pyridoxal phosphate)lysine. Substrate is bound at residue threonine 352.

The protein belongs to the class-II pyridoxal-phosphate-dependent aminotransferase family. BioF subfamily. In terms of assembly, homodimer. The cofactor is pyridoxal 5'-phosphate.

It carries out the reaction 6-carboxyhexanoyl-[ACP] + L-alanine + H(+) = (8S)-8-amino-7-oxononanoate + holo-[ACP] + CO2. The protein operates within cofactor biosynthesis; biotin biosynthesis. Catalyzes the decarboxylative condensation of pimeloyl-[acyl-carrier protein] and L-alanine to produce 8-amino-7-oxononanoate (AON), [acyl-carrier protein], and carbon dioxide. This Escherichia coli (strain SE11) protein is 8-amino-7-oxononanoate synthase.